Reading from the N-terminus, the 524-residue chain is Zinc finger protein 346 (524 aa).

7 consecutive Matrin-type zinc fingers follow at residues 34–64, 92–126, 162–192, 226–260, 286–316, 343–373, and 400–430; these read TQCK…KVRR, DRSK…LRLR, KFCK…QETK, GKGF…LMSM, FSCD…HLKS, FSCD…HLMS, and FSCD…QLMS. The Zn(2+) site is built by C36, C39, H52, H58, C97, C100, H113, and H119. Disordered regions lie at residues 453–486 and 494–513; these read SAGG…GSLP and PLYP…TMSP. A compositionally biased stretch (low complexity) spans 476–486; it reads PKGPSSFGSLP.

It is found in the nucleus. The protein resides in the cytoplasm. Its function is as follows. Binds preferentially to dsRNA, but also to RNA-DNA hybrids. The protein is Zinc finger protein 346 of Xenopus laevis (African clawed frog).